A 66-amino-acid polypeptide reads, in one-letter code: Large ribosomal subunit protein bL33c (66 aa).

This sequence belongs to the bacterial ribosomal protein bL33 family.

The protein resides in the plastid. It is found in the chloroplast. This is Large ribosomal subunit protein bL33c from Physcomitrium patens (Spreading-leaved earth moss).